The following is a 98-amino-acid chain: NADH-ubiquinone oxidoreductase chain 4L (98 aa).

The next 3 membrane-spanning stretches (helical) occupy residues 1-21, 27-47, and 61-81; these read MIPTYMNIMLAFTISLLGMLT, VASLLCLEGMTMSLFIMTALI, and IILLVFAACEAAVGLALLISI.

It belongs to the complex I subunit 4L family. Core subunit of respiratory chain NADH dehydrogenase (Complex I) which is composed of 45 different subunits.

It is found in the mitochondrion inner membrane. The enzyme catalyses a ubiquinone + NADH + 5 H(+)(in) = a ubiquinol + NAD(+) + 4 H(+)(out). Core subunit of the mitochondrial membrane respiratory chain NADH dehydrogenase (Complex I) which catalyzes electron transfer from NADH through the respiratory chain, using ubiquinone as an electron acceptor. Part of the enzyme membrane arm which is embedded in the lipid bilayer and involved in proton translocation. The protein is NADH-ubiquinone oxidoreductase chain 4L (MT-ND4L) of Macaca sylvanus (Barbary macaque).